The sequence spans 235 residues: Small ribosomal subunit protein uS2c (235 aa).

It belongs to the universal ribosomal protein uS2 family.

The protein localises to the plastid. This chain is Small ribosomal subunit protein uS2c (rps2), found in Euglena longa (Euglenophycean alga).